We begin with the raw amino-acid sequence, 156 residues long: Transcription factor MafF (156 aa).

The tract at residues 51-76 (RLKQRRRTLKNRGYAASCRVKRVCQK) is basic motif. In terms of domain architecture, bZIP spans 51–114 (RLKQRRRTLK…DALRGKCEAL (64 aa)). Positions 79 to 93 (LQKQKSELEREVDKL) are leucine-zipper.

Belongs to the bZIP family. Maf subfamily. In terms of assembly, monomer and homo- or heterodimer. Interacts with MIP. Forms high affinity heterodimers with members of the CNC-bZIP family such as NFE2L1/NRF1. Highly expressed in the lung, lower expression in the brain, thymus, liver, spleen, intestine, kidney, heart, muscle, and ovary. Not significantly expressed in hematopoietic cells.

It localises to the nucleus. Since they lack a putative transactivation domain, the small Mafs behave as transcriptional repressors when they dimerize among themselves. However, they seem to serve as transcriptional activators by dimerizing with other (usually larger) basic-zipper proteins, such as NFE2L1/NRF1, and recruiting them to specific DNA-binding sites. Interacts with the upstream promoter region of the oxytocin receptor gene. May be a transcriptional enhancer in the up-regulation of the oxytocin receptor gene at parturition. This Mus musculus (Mouse) protein is Transcription factor MafF (Maff).